The sequence spans 143 residues: Large ribosomal subunit protein uL13 (143 aa).

It belongs to the universal ribosomal protein uL13 family. In terms of assembly, part of the 50S ribosomal subunit.

This protein is one of the early assembly proteins of the 50S ribosomal subunit, although it is not seen to bind rRNA by itself. It is important during the early stages of 50S assembly. The polypeptide is Large ribosomal subunit protein uL13 (Desulfitobacterium hafniense (strain DSM 10664 / DCB-2)).